Here is a 728-residue protein sequence, read N- to C-terminus: Methylmalonyl-CoA mutase large subunit (728 aa).

The (R)-methylmalonyl-CoA site is built by tyrosine 75, methionine 78, arginine 82, threonine 85, arginine 87, tyrosine 89, and serine 114. Phenylalanine 117 and alanine 139 together coordinate cob(II)alamin. Positions 195 and 197 each coordinate (R)-methylmalonyl-CoA. Cob(II)alamin contacts are provided by valine 206 and arginine 207. (R)-methylmalonyl-CoA-binding residues include arginine 207, histidine 244, arginine 283, and serine 285. 11 residues coordinate cob(II)alamin: glycine 333, glutamate 370, alanine 373, glycine 609, histidine 610, aspartate 611, arginine 612, serine 655, leucine 657, glycine 686, and threonine 709. Positions 597-728 constitute a B12-binding domain; the sequence is RPRILLAKMG…VKKLRASLDA (132 aa).

Belongs to the methylmalonyl-CoA mutase family. Heterodimer of an alpha and a beta chain. The cofactor is adenosylcob(III)alamin.

The catalysed reaction is (R)-methylmalonyl-CoA = succinyl-CoA. Catalyzes the reversible conversion of succinyl-CoA to (R)-methylmalonyl-CoA through a radical mechanism. Is involved in the fermentation of pyruvate to propanoate that occurs in Propionibacteria. This chain is Methylmalonyl-CoA mutase large subunit (mutB), found in Propionibacterium freudenreichii subsp. shermanii.